The sequence spans 258 residues: Thiazole synthase (258 aa).

The Schiff-base intermediate with DXP role is filled by Lys100. 1-deoxy-D-xylulose 5-phosphate contacts are provided by residues Gly161, 187 to 188, and 209 to 210; these read AG and NT.

Belongs to the ThiG family. Homotetramer. Forms heterodimers with either ThiH or ThiS.

It is found in the cytoplasm. It catalyses the reaction [ThiS sulfur-carrier protein]-C-terminal-Gly-aminoethanethioate + 2-iminoacetate + 1-deoxy-D-xylulose 5-phosphate = [ThiS sulfur-carrier protein]-C-terminal Gly-Gly + 2-[(2R,5Z)-2-carboxy-4-methylthiazol-5(2H)-ylidene]ethyl phosphate + 2 H2O + H(+). The protein operates within cofactor biosynthesis; thiamine diphosphate biosynthesis. In terms of biological role, catalyzes the rearrangement of 1-deoxy-D-xylulose 5-phosphate (DXP) to produce the thiazole phosphate moiety of thiamine. Sulfur is provided by the thiocarboxylate moiety of the carrier protein ThiS. In vitro, sulfur can be provided by H(2)S. This Campylobacter jejuni (strain RM1221) protein is Thiazole synthase.